The sequence spans 378 residues: MSDTMQLDSIWHNGKQYRKGYTTGSCATAAAKVAALMVLRQQVIDHVSIVTPSGVTLRLNVEQPLIEGQQATAAIRKDGGDDVDATHGMLIFARVTLCDHGEIHLRGGEGVGTVTRKGVGLPVGSSAINRTPRQTIEAAVREAIGPLRGAEVEIFAPEGEERAKKTYNGRLGILGGISIIGTTGIVTPMSEESWKRSLAIELEMKRSAGAEKVILVPGNHGERFVREQLGLDGQLVVTMSNFVGYMLQEAVRLGFRHIMLVGHPGKLVKVAAGIFHTHSHIADGRMETLIAYLALMGASQELLLEVSHCDTTEAAMELIAEHGLQAVYDRIAERICERMSEMLRFAVNPPRCDAIMFSFDNQILGTSRPLNDILEAMR.

Belongs to the CbiD family.

The catalysed reaction is Co-precorrin-5B + S-adenosyl-L-methionine = Co-precorrin-6A + S-adenosyl-L-homocysteine. It functions in the pathway cofactor biosynthesis; adenosylcobalamin biosynthesis; cob(II)yrinate a,c-diamide from sirohydrochlorin (anaerobic route): step 6/10. Functionally, catalyzes the methylation of C-1 in cobalt-precorrin-5B to form cobalt-precorrin-6A. This is Cobalt-precorrin-5B C(1)-methyltransferase from Photorhabdus laumondii subsp. laumondii (strain DSM 15139 / CIP 105565 / TT01) (Photorhabdus luminescens subsp. laumondii).